The primary structure comprises 292 residues: Putative xanthine dehydrogenase FAD-binding subunit XdhB (292 aa).

The FAD-binding PCMH-type domain occupies 1–176; that stretch reads MFDFASYHRA…VAFHFPPQPK (176 aa). Residues 27 to 34, 109 to 113, Ile-165, and Phe-184 contribute to the FAD site; these read KLLAGGTD and ATYGG.

As to quaternary structure, heterotrimer of XdhA, XdhB and XdhC. Requires FAD as cofactor.

The enzyme catalyses xanthine + NAD(+) + H2O = urate + NADH + H(+). The catalysed reaction is hypoxanthine + NAD(+) + H2O = xanthine + NADH + H(+). The protein operates within purine metabolism; hypoxanthine degradation; urate from hypoxanthine: step 1/2. It functions in the pathway purine metabolism; hypoxanthine degradation; urate from hypoxanthine: step 2/2. Presumed to be a dehydrogenase, but possibly an oxidase. Participates in limited purine salvage (requires aspartate) but does not support aerobic growth on purines as the sole carbon source (purine catabolism). The sequence is that of Putative xanthine dehydrogenase FAD-binding subunit XdhB (xdhB) from Escherichia coli (strain K12).